The chain runs to 399 residues: tRNA-specific 2-thiouridylase MnmA (399 aa).

ATP-binding positions include 18–25 and Leu44; that span reads AMSGGVDS. Cys112 functions as the Nucleophile in the catalytic mechanism. The cysteines at positions 112 and 213 are disulfide-linked. Gly136 contacts ATP. An interaction with tRNA region spans residues 163 to 165; it reads RDQ. Cys213 functions as the Cysteine persulfide intermediate in the catalytic mechanism.

This sequence belongs to the MnmA/TRMU family.

It localises to the cytoplasm. The enzyme catalyses S-sulfanyl-L-cysteinyl-[protein] + uridine(34) in tRNA + AH2 + ATP = 2-thiouridine(34) in tRNA + L-cysteinyl-[protein] + A + AMP + diphosphate + H(+). In terms of biological role, catalyzes the 2-thiolation of uridine at the wobble position (U34) of tRNA, leading to the formation of s(2)U34. In Rhizobium rhizogenes (strain K84 / ATCC BAA-868) (Agrobacterium radiobacter), this protein is tRNA-specific 2-thiouridylase MnmA.